The primary structure comprises 307 residues: Olfactory receptor 5AC1 (307 aa).

The Extracellular portion of the chain corresponds to 1–28 (MAEENKILVTHFVLTGLTDHPGLQAPLF). Residues 29 to 49 (LVFLVIYLITLVGNLGLMALI) form a helical membrane-spanning segment. Over 50-56 (WKDPHLH) the chain is Cytoplasmic. Residues 57–77 (TPIYLFLGSLAFADACTSSSV) traverse the membrane as a helical segment. Residues 78–99 (TSKMLINFLSKNHMLSMAKCAT) are Extracellular-facing. A disulfide bond links Cys-97 and Cys-179. A helical membrane pass occupies residues 100 to 120 (QFYFFGSNATTECFLLVVMAY). Topologically, residues 121–143 (DRYVAICNPLLYPVVMSNSLCTQ) are cytoplasmic. Residues 144–164 (FIGISYFIGFLHSAIHVGLLF) traverse the membrane as a helical segment. At 165–195 (RLTFCRSNIIHYFYCEILQLFKISCTNPTVN) the chain is on the extracellular side. The chain crosses the membrane as a helical span at residues 196–216 (ILLIFIFSAFIQVFTFMTLIV). At 217–239 (SYSYILSAILKKKSEKGRSKAFS) the chain is on the cytoplasmic side. Residues 240 to 260 (TCSAHLLSVSLFYGTLFFMYV) traverse the membrane as a helical segment. The Extracellular segment spans residues 261–271 (SSRSGSAADQA). The helical transmembrane segment at 272 to 292 (KMYSLFYTIIIPLLNPFIYSL) threads the bilayer. Topologically, residues 293–307 (RNKEVIDALRRIMKK) are cytoplasmic.

The protein belongs to the G-protein coupled receptor 1 family.

Its subcellular location is the cell membrane. Odorant receptor. In Homo sapiens (Human), this protein is Olfactory receptor 5AC1 (OR5AC1).